We begin with the raw amino-acid sequence, 61 residues long: Mu-diguetoxin-Dc1c (61 aa).

3 disulfide bridges follow: Cys-12-Cys-25, Cys-19-Cys-39, and Cys-24-Cys-53.

The protein belongs to the neurotoxin 26 (DTX) family. Expressed by the venom gland.

It localises to the secreted. Its function is as follows. Acts by delaying the inactivation of presynaptic voltage-sensitive sodium channels (Nav). Acts against insects and causes a progressive spastic paralysis. The chain is Mu-diguetoxin-Dc1c from Diguetia canities (Desert bush spider).